The sequence spans 380 residues: E3 ubiquitin-protein ligase PHF7 (380 aa).

The interval 1-23 (MRTIKEKKEHPRLRKTARTKKVT) is disordered. Positions 10–23 (HPRLRKTARTKKVT) are enriched in basic residues. The C2HC pre-PHD-type zinc finger occupies 30–68 (GPVCLLCFQEPGDPEKLGEFLQKDNLCVHYFCLILSSKL). The Zn(2+) site is built by Cys-33, Cys-36, His-58, and Cys-61. The interval 67–92 (KLPQKGQPNRGLHGFMPEDIKKEAAR) is required for interaction and ubiquitination of the nucleosome core particle. The PHD-type zinc finger occupies 96–145 (KVCFVCKRKGAAIRCQKDQCVQNFHLPCGQERGCLSQFFGEYKSYCGKHR). Zn(2+) is bound by residues Cys-98, Cys-101, Cys-110, Cys-115, His-120, Cys-123, Cys-141, His-144, Cys-159, Cys-162, Cys-178, Cys-179, His-185, Cys-188, Cys-203, Cys-206, Cys-247, Cys-252, Cys-272, Cys-275, His-281, Cys-284, Cys-296, and Cys-299. Residues 150–306 (IHQRSFGESC…NECLPASTED (157 aa)) form a required for interaction with ubiquitinated UBE2D2 region. The segment at 159–207 (CVLCCEDLSRASVENIRSPCCSQAIYHRKCIQKYAHTSAKHFFKCPQCN) adopts an RING-type; degenerate zinc-finger fold. The segment at 243 to 300 (RYQHCDAPICLYEQGRDSFEDEGRWRLILCATCGSHGTHRDCSSLRPNSKKWECNECL) is required for association with and ubiquitination of H3. Positions 352–367 (EKPESSSGSSCQSWRS) are enriched in low complexity. Positions 352–380 (EKPESSSGSSCQSWRSKGIKVTKDCKKSK) are disordered.

In terms of assembly, interacts with MEF2C; the interaction promotes MEF2C binding to its transcription targets. Interacts with GATA4; the interaction promotes GATA4 binding to its transcription targets. Interacts with UBE2D2; the interaction inhibits cleavage of PHF7 and promotes association of the complex with the nucleosome core particle.

The protein localises to the nucleus. It carries out the reaction S-ubiquitinyl-[E2 ubiquitin-conjugating enzyme]-L-cysteine + [acceptor protein]-L-lysine = [E2 ubiquitin-conjugating enzyme]-L-cysteine + N(6)-ubiquitinyl-[acceptor protein]-L-lysine.. It participates in protein modification; protein ubiquitination. E3 ubiquitin-protein ligase which ubiquitinates histone H3 at 'Lys-14'. Required for male fertility, via inhibition of SPOP-mediated BRDT degradation when in the presence of acetylated histone H4 in early condensing spermatids. Stabilization of BRDT allows it to facilitate histone removal in early condensing spermatids and promote the progression of histone-to-protamine exchange. Promotes the expression of steroidogenesis proteins in the testes, and as a result plays a role in maintaining testosterone levels and repressing osteoclastogenesis. Promotes transcription of cardiac enhancer genes by facilitating binding of cardiac transcription factors such as MEF2C and GATA4 to target gene promoters. Ubiquitinates histone H4. Ubiquitinates histone H2A and H3 as part of the nucleosome core particle. This Rattus norvegicus (Rat) protein is E3 ubiquitin-protein ligase PHF7.